A 202-amino-acid polypeptide reads, in one-letter code: MKLASKEAGMIDLFMILGAYLLGGMSTGYYLVKLWRQEDVRNQGSGATGATNAGRVLGKKGFLLTLMGDALKGALAPALSMHFNLSLTTLILCLIAGVAGHIWPLQLGLRGGKGVAPALGGILVVDPMLASAAAGVFLFVLALTRQFTLSGLAAILGAPILSLIMARPFEQSAGLAVLAIFILLAHRKNIREMLNKSSQRRR.

Transmembrane regions (helical) follow at residues 8-28 (AGMI…MSTG), 85-105 (LSLT…IWPL), 122-142 (ILVV…FVLA), 146-166 (QFTL…LIMA), and 173-190 (AGLA…RKNI).

Belongs to the PlsY family. Probably interacts with PlsX.

The protein resides in the cell membrane. The catalysed reaction is an acyl phosphate + sn-glycerol 3-phosphate = a 1-acyl-sn-glycero-3-phosphate + phosphate. The protein operates within lipid metabolism; phospholipid metabolism. Functionally, catalyzes the transfer of an acyl group from acyl-phosphate (acyl-PO(4)) to glycerol-3-phosphate (G3P) to form lysophosphatidic acid (LPA). This enzyme utilizes acyl-phosphate as fatty acyl donor, but not acyl-CoA or acyl-ACP. This Desulfitobacterium hafniense (strain Y51) protein is Glycerol-3-phosphate acyltransferase 1.